The following is a 1005-amino-acid chain: Vacuolar membrane protease (1005 aa).

Topologically, residues methionine 1 to glutamine 14 are cytoplasmic. Residues threonine 15 to valine 35 traverse the membrane as a helical segment. Residues serine 36–lysine 353 lie on the Vacuolar side of the membrane. Asparagine 107 carries an N-linked (GlcNAc...) asparagine glycan. Residues histidine 152 and aspartate 164 each coordinate Zn(2+). The Proton acceptor role is filled by glutamate 196. Position 197 (glutamate 197) interacts with Zn(2+). Asparagine 213 carries N-linked (GlcNAc...) asparagine glycosylation. Glutamate 222 and histidine 311 together coordinate Zn(2+). The helical transmembrane segment at proline 354 to leucine 374 threads the bilayer. The Cytoplasmic portion of the chain corresponds to lysine 375 to phenylalanine 448. The tract at residues glycine 379–alanine 420 is disordered. Positions serine 406–aspartate 419 are enriched in polar residues. The chain crosses the membrane as a helical span at residues tryptophan 449–isoleucine 469. At asparagine 470–tyrosine 479 the chain is on the vacuolar side. Residues phenylalanine 480 to alanine 500 traverse the membrane as a helical segment. Over phenylalanine 501–threonine 519 the chain is Cytoplasmic. A helical membrane pass occupies residues isoleucine 520–glycine 540. Residues lysine 541–glutamine 543 are Vacuolar-facing. Residues valine 544–glycine 564 form a helical membrane-spanning segment. Over threonine 565–aspartate 644 the chain is Cytoplasmic. The interval aspartate 577 to lysine 640 is disordered. A compositionally biased stretch (low complexity) spans serine 588–aspartate 606. A helical transmembrane segment spans residues glycine 645–valine 665. Residues glycine 666–alanine 686 lie on the Vacuolar side of the membrane. Asparagine 677 carries an N-linked (GlcNAc...) asparagine glycan. Residues tryptophan 687–phenylalanine 707 traverse the membrane as a helical segment. Over serine 708 to arginine 713 the chain is Cytoplasmic. The helical transmembrane segment at glycine 714–phenylalanine 734 threads the bilayer. Topologically, residues proline 735–valine 1005 are vacuolar. N-linked (GlcNAc...) asparagine glycans are attached at residues asparagine 761 and asparagine 961.

It belongs to the peptidase M28 family. Zn(2+) serves as cofactor.

The protein localises to the vacuole membrane. In terms of biological role, may be involved in vacuolar sorting and osmoregulation. The polypeptide is Vacuolar membrane protease (Coprinopsis cinerea (strain Okayama-7 / 130 / ATCC MYA-4618 / FGSC 9003) (Inky cap fungus)).